The following is a 225-amino-acid chain: Ribose-5-phosphate isomerase A (225 aa).

Residues 26 to 29, 82 to 85, and 95 to 98 contribute to the substrate site; these read TGST, DGAD, and KGGG. The active-site Proton acceptor is the Glu104. A substrate-binding site is contributed by Lys122.

This sequence belongs to the ribose 5-phosphate isomerase family. As to quaternary structure, homodimer.

The enzyme catalyses aldehydo-D-ribose 5-phosphate = D-ribulose 5-phosphate. Its pathway is carbohydrate degradation; pentose phosphate pathway; D-ribose 5-phosphate from D-ribulose 5-phosphate (non-oxidative stage): step 1/1. Its function is as follows. Catalyzes the reversible conversion of ribose-5-phosphate to ribulose 5-phosphate. In Streptococcus gordonii (strain Challis / ATCC 35105 / BCRC 15272 / CH1 / DL1 / V288), this protein is Ribose-5-phosphate isomerase A.